Here is a 397-residue protein sequence, read N- to C-terminus: Phosphoglycerate kinase (397 aa).

Substrate contacts are provided by residues 21–23, Arg36, 59–62, Arg119, and Arg152; these read DVN and HFGR. ATP is bound by residues Lys202, Glu324, and 354 to 357; that span reads GGDT.

This sequence belongs to the phosphoglycerate kinase family. As to quaternary structure, monomer.

The protein localises to the cytoplasm. It carries out the reaction (2R)-3-phosphoglycerate + ATP = (2R)-3-phospho-glyceroyl phosphate + ADP. Its pathway is carbohydrate degradation; glycolysis; pyruvate from D-glyceraldehyde 3-phosphate: step 2/5. This is Phosphoglycerate kinase from Cereibacter sphaeroides (strain KD131 / KCTC 12085) (Rhodobacter sphaeroides).